The following is a 340-amino-acid chain: DNA-directed RNA polymerase subunit alpha (340 aa).

The tract at residues 1–235 (MYRNWTELIK…DQLNPFINFD (235 aa)) is alpha N-terminal domain (alpha-NTD). Residues 251–340 (WNPNLFRKVD…LSKQFEEENF (90 aa)) form an alpha C-terminal domain (alpha-CTD) region.

The protein belongs to the RNA polymerase alpha chain family. In terms of assembly, homodimer. The RNAP catalytic core consists of 2 alpha, 1 beta, 1 beta' and 1 omega subunit. When a sigma factor is associated with the core the holoenzyme is formed, which can initiate transcription.

It catalyses the reaction RNA(n) + a ribonucleoside 5'-triphosphate = RNA(n+1) + diphosphate. In terms of biological role, DNA-dependent RNA polymerase catalyzes the transcription of DNA into RNA using the four ribonucleoside triphosphates as substrates. The sequence is that of DNA-directed RNA polymerase subunit alpha from Magnetococcus marinus (strain ATCC BAA-1437 / JCM 17883 / MC-1).